The following is a 662-amino-acid chain: Threonine--tRNA ligase (662 aa).

In terms of domain architecture, TGS spans 1–64; it reads MSQSVSLTFP…ADGKIEIITR (64 aa). A catalytic region spans residues 245 to 547; the sequence is DHRRLGREMD…LIENFAGHMP (303 aa). Zn(2+) contacts are provided by C341, H392, and H524.

This sequence belongs to the class-II aminoacyl-tRNA synthetase family. As to quaternary structure, homodimer. Requires Zn(2+) as cofactor.

It localises to the cytoplasm. It carries out the reaction tRNA(Thr) + L-threonine + ATP = L-threonyl-tRNA(Thr) + AMP + diphosphate + H(+). In terms of biological role, catalyzes the attachment of threonine to tRNA(Thr) in a two-step reaction: L-threonine is first activated by ATP to form Thr-AMP and then transferred to the acceptor end of tRNA(Thr). Also edits incorrectly charged L-seryl-tRNA(Thr). The protein is Threonine--tRNA ligase of Rhizobium rhizogenes (strain K84 / ATCC BAA-868) (Agrobacterium radiobacter).